The chain runs to 377 residues: Lipoyl synthase, mitochondrial (377 aa).

[4Fe-4S] cluster is bound by residues Cys-103, Cys-108, Cys-114, Cys-134, Cys-138, Cys-141, and Ser-349. Residues 119–338 (EHGTQTATIM…EERGNELGFL (220 aa)) form the Radical SAM core domain.

The protein belongs to the radical SAM superfamily. Lipoyl synthase family. [4Fe-4S] cluster is required as a cofactor.

The protein resides in the mitochondrion. It carries out the reaction [[Fe-S] cluster scaffold protein carrying a second [4Fe-4S](2+) cluster] + N(6)-octanoyl-L-lysyl-[protein] + 2 oxidized [2Fe-2S]-[ferredoxin] + 2 S-adenosyl-L-methionine + 4 H(+) = [[Fe-S] cluster scaffold protein] + N(6)-[(R)-dihydrolipoyl]-L-lysyl-[protein] + 4 Fe(3+) + 2 hydrogen sulfide + 2 5'-deoxyadenosine + 2 L-methionine + 2 reduced [2Fe-2S]-[ferredoxin]. It participates in protein modification; protein lipoylation via endogenous pathway; protein N(6)-(lipoyl)lysine from octanoyl-[acyl-carrier-protein]: step 2/2. Catalyzes the radical-mediated insertion of two sulfur atoms into the C-6 and C-8 positions of the octanoyl moiety bound to the lipoyl domains of lipoate-dependent enzymes, thereby converting the octanoylated domains into lipoylated derivatives. The sequence is that of Lipoyl synthase, mitochondrial from Drosophila melanogaster (Fruit fly).